Consider the following 65-residue polypeptide: UPF0434 protein HS_0657 (65 aa).

Belongs to the UPF0434 family.

In Histophilus somni (strain 129Pt) (Haemophilus somnus), this protein is UPF0434 protein HS_0657.